Consider the following 162-residue polypeptide: Anaerobic nitrite reductase GLB1 (162 aa).

The Globin domain maps to 9–159 (VFSEEKEALV…LVAAIKQEMK (151 aa)). Residues 42–46 (EIAPS) carry the Homodimerization motif. 5 residues coordinate heme b: K66, H70, R100, T104, and H105. The short motif at 112 to 124 (DGHFEVTRFALLE) is the Homodimerization element.

It belongs to the plant globin family. As to quaternary structure, homodimer. It depends on heme b as a cofactor. In terms of tissue distribution, seeds and roots.

It localises to the cytoplasm. It is found in the nucleus. It carries out the reaction Fe(III)-heme b-[protein] + nitric oxide + H2O = Fe(II)-heme b-[protein] + nitrite + 2 H(+). Phytoglobin that reduces nitrite to nitric oxide (NO) under anoxic conditions (e.g. during flooding or in waterlogged soil). May not function as an oxygen storage or transport protein. Has an unusually high affinity for O(2) through an hexacoordinate heme iron because of a very low dissociation constant. The protein is Anaerobic nitrite reductase GLB1 of Hordeum vulgare (Barley).